Consider the following 275-residue polypeptide: Acetyl-coenzyme A carboxylase carboxyl transferase subunit beta (275 aa).

The 255-residue stretch at 21–275 folds into the CoA carboxyltransferase N-terminal domain; sequence GLWIKCQCGA…IKIIGMHQAG (255 aa). Zn(2+)-binding residues include Cys-26, Cys-28, Cys-44, and Cys-47. A C4-type zinc finger spans residues 26 to 47; sequence CQCGAILFAKDLERNLKVCQKC.

This sequence belongs to the AccD/PCCB family. As to quaternary structure, acetyl-CoA carboxylase is a heterohexamer composed of biotin carboxyl carrier protein (AccB), biotin carboxylase (AccC) and two subunits each of ACCase subunit alpha (AccA) and ACCase subunit beta (AccD). It depends on Zn(2+) as a cofactor.

The protein localises to the cytoplasm. The catalysed reaction is N(6)-carboxybiotinyl-L-lysyl-[protein] + acetyl-CoA = N(6)-biotinyl-L-lysyl-[protein] + malonyl-CoA. It participates in lipid metabolism; malonyl-CoA biosynthesis; malonyl-CoA from acetyl-CoA: step 1/1. Functionally, component of the acetyl coenzyme A carboxylase (ACC) complex. Biotin carboxylase (BC) catalyzes the carboxylation of biotin on its carrier protein (BCCP) and then the CO(2) group is transferred by the transcarboxylase to acetyl-CoA to form malonyl-CoA. In Desulforudis audaxviator (strain MP104C), this protein is Acetyl-coenzyme A carboxylase carboxyl transferase subunit beta.